The primary structure comprises 680 residues: WD repeat-containing protein 48 homolog (680 aa).

8 WD repeats span residues 26 to 65 (QHRN…SEKY), 71 to 110 (HHND…CMST), 113 to 152 (THRD…ALTA), 164 to 203 (GSKD…RIMK), 206 to 245 (GHTE…CVQT), 248 to 287 (VHKE…NKTL), 290 to 329 (EEQA…RCTL), and 350 to 389 (KGGA…KKEQ). A disordered region spans residues 592–616 (ETTPSGGNANNSLQNSQSDANSEGS).

This sequence belongs to the WD repeat WDR48 family. Catalytic component of the Usp12-46 deubiquitylase complex consisting of Usp12-46, Wdr20 and Uaf1; regulatory subunit that, together wtih Wdr20, stabilizes Usp12-46. The Usp12-46 deubiquitylase complex associates with arr/arrow; the interaction leads to deubiquitination and stabilization of arr/arrow.

In terms of biological role, regulatory component of the Usp12-46 deubiquitylase complex. activates deubiquitination by increasing the catalytic turnover without increasing the affinity of deubiquitinating enzymes for the substrate. The complex deubiquitylates the wg/wingless-signaling receptor arr/arrow, which stabilizes the receptor and increases its concentration at the cell surface; this enhances the sensitivity of cells to wg/wingless-signal stimulation. This increases the amplitude and spatial range of the signaling response to the wg/wingless morphogen gradient, facilitating the precise concentration-dependent regulation of its target genes. Together with Wdr20 and Usp12-46 required for wg/wingless-mediated signaling in the wing imaginal disc and for wg/wingless-dependent regulation of intestinal stem cell proliferation. In Drosophila sechellia (Fruit fly), this protein is WD repeat-containing protein 48 homolog.